The following is a 91-amino-acid chain: Bacterial microcompartment shell vertex protein PduN (91 aa).

One can recognise a BMV domain in the interval Met-1–Asp-87.

It belongs to the CcmL/EutN family. As to quaternary structure, homopentamer. Interacts with shell protein PduA.

The protein localises to the bacterial microcompartment. It functions in the pathway polyol metabolism; 1,2-propanediol degradation. In terms of biological role, probably forms vertices in the shell of the bacterial microcompartment (BMC) dedicated to 1,2-propanediol (1,2-PD) degradation. Required for structural integrity of BMCs and to mitigate propionaldehyde toxicity. The 1,2-PD-specific bacterial microcompartment (BMC) concentrates low levels of 1,2-PD catabolic enzymes, concentrates volatile reaction intermediates thus enhancing pathway flux and keeps the level of toxic, mutagenic propionaldehyde low. This Salmonella typhimurium (strain LT2 / SGSC1412 / ATCC 700720) protein is Bacterial microcompartment shell vertex protein PduN.